Reading from the N-terminus, the 581-residue chain is Prolactin receptor (581 aa).

Positions 1–24 (MKENAASRVLFILLLFLFASLLNG) are cleaved as a signal peptide. The Extracellular portion of the chain corresponds to 25-237 (QSPPEKPKLI…NDFPVKDTSM (213 aa)). 2 consecutive Fibronectin type-III domains span residues 27–127 (PPEK…IVEP) and 129–229 (PPVN…IPND). A disulfide bond links Cys-36 and Cys-46. N-linked (GlcNAc...) asparagine glycosylation is present at Asn-59. A disulfide bond links Cys-75 and Cys-86. Asn-132 is a glycosylation site (N-linked (GlcNAc...) asparagine). Asp-211 and His-212 together coordinate Zn(2+). Residues 215-219 (WSEWS) carry the WSXWS motif motif. A helical transmembrane segment spans residues 238–258 (WIFVGVLSAVICLIMVWAVAL). The Cytoplasmic segment spans residues 259 to 581 (KGYSMVTCIL…SAKKAPPALP (323 aa)). The Box 1 motif motif lies at 267 to 275 (ILPPVPGPK). Composition is skewed to basic and acidic residues over residues 323–349 (QHLMPHPSKEHMEQGVKPMHLDPDTDS) and 375–388 (HIPEGPEKLEDPET). Disordered regions lie at residues 323–388 (QHLM…DPET) and 462–492 (FKPSKTIETGGEGKAAKQSESEGYSSEPDQD).

The protein belongs to the type I cytokine receptor family. Type 1 subfamily. Interacts with SMARCA1. Interacts with NEK3 and VAV2 and this interaction is prolactin-dependent. Expressed in all tissues examined; liver, pituitary, adrenal gland, ovary and fetal liver.

The protein localises to the membrane. Functionally, this is a receptor for the anterior pituitary hormone prolactin. The chain is Prolactin receptor (PRLR) from Ovis aries (Sheep).